The sequence spans 655 residues: Methylenetetrahydrofolate reductase (NADPH) (655 aa).

The disordered stretch occupies residues 1 to 39 (MVNEPRGNGSPGPRWEGSSSGSESSRTSSRCSTPGLDPE). Phosphoserine occurs at positions 10, 18, 19, 20, 22, 24, 25, 28, and 29. Residues 11–35 (PGPRWEGSSSGSESSRTSSRCSTPG) are compositionally biased toward low complexity. Thr-33 carries the post-translational modification Phosphothreonine. Glu-62 (proton donor/acceptor) is an active-site residue. Residues 62-67 (EFFPPR) and 93-94 (TW) each bind NAD(+). Thr-93 bears the Phosphothreonine mark. An FAD-binding site is contributed by 93–94 (TW). Residue Ser-102 is modified to Phosphoserine. FAD is bound by residues His-126, 156-158 (RGD), 173-174 (YA), Tyr-196, 200-203 (HPEG), Asp-209, and Lys-216. Asp-158 provides a ligand contact to substrate. Substrate contacts are provided by Gln-227, Tyr-320, and Arg-324. Residue Ser-393 is modified to Phosphoserine. Thr-450 carries the phosphothreonine modification. S-adenosyl-L-methionine-binding positions include Asn-455, 460–463 (AAET), 480–484 (TINSQ), Thr-559, and Thr-572.

Belongs to the methylenetetrahydrofolate reductase family. In terms of assembly, homodimer. It depends on FAD as a cofactor. Post-translationally, phosphorylation of an N-terminal serine-rich phosphorylation region increases sensitivity to S-adenosylmethionine and inhibition.

It carries out the reaction (6S)-5-methyl-5,6,7,8-tetrahydrofolate + NADP(+) = (6R)-5,10-methylene-5,6,7,8-tetrahydrofolate + NADPH + H(+). It functions in the pathway one-carbon metabolism; tetrahydrofolate interconversion. Its activity is regulated as follows. Allosterically regulated by S-adenosylmethionine (SAM). Its function is as follows. Catalyzes the conversion of 5,10-methylenetetrahydrofolate to 5-methyltetrahydrofolate, a cosubstrate for homocysteine remethylation to methionine. Represents a key regulatory connection between the folate and methionine cycles. The chain is Methylenetetrahydrofolate reductase (NADPH) (MTHFR) from Bos taurus (Bovine).